Consider the following 293-residue polypeptide: tRNA pseudouridine synthase A (293 aa).

D60 (nucleophile) is an active-site residue. Position 118 (Y118) interacts with substrate.

It belongs to the tRNA pseudouridine synthase TruA family. Homodimer.

The catalysed reaction is uridine(38/39/40) in tRNA = pseudouridine(38/39/40) in tRNA. Its function is as follows. Formation of pseudouridine at positions 38, 39 and 40 in the anticodon stem and loop of transfer RNAs. This Rippkaea orientalis (strain PCC 8801 / RF-1) (Cyanothece sp. (strain PCC 8801)) protein is tRNA pseudouridine synthase A.